A 362-amino-acid polypeptide reads, in one-letter code: Histidine protein methyltransferase 1 homolog (362 aa).

The interval 28–89 (KSQKGKEDKN…ACEKQPSLKP (62 aa)) is disordered. Polar residues predominate over residues 55–73 (SLGSAASSEDTDSPPSTAD). Residues serine 62 and serine 67 each carry the phosphoserine modification. Histidine 144 is subject to Tele-methylhistidine. S-adenosyl-L-methionine is bound by residues 158 to 162 (IWECT), glycine 185, and 206 to 208 (QDY). Positions 237 to 243 (PAGKRQR) match the Nuclear localization signal motif. Residues 259–261 (GEW) and serine 283 contribute to the S-adenosyl-L-methionine site.

It belongs to the methyltransferase superfamily. METTL18 family. As to quaternary structure, interacts with GRWD1 and members of the heat shock protein 90 and 70 families; these proteins may possibly be methylation substrates for the enzyme. Monomethylated at His-144 through automethylation. Automethylation at His-144 positively regulates the methyltransferase activity toward RPL3. Probably methylated on other residues.

It localises to the cytoplasm. The protein resides in the cytosol. It is found in the nucleus. Its subcellular location is the nucleolus. It catalyses the reaction L-histidyl-[protein] + S-adenosyl-L-methionine = N(tele)-methyl-L-histidyl-[protein] + S-adenosyl-L-homocysteine + H(+). Functionally, protein-L-histidine N-tele-methyltransferase that specifically monomethylates RPL3, thereby regulating translation elongation. Histidine methylation of RPL3 regulates translation elongation by slowing ribosome traversal on tyrosine codons: slower elongation provides enough time for proper folding of synthesized proteins and prevents cellular aggregation of tyrosine-rich proteins. This Rattus norvegicus (Rat) protein is Histidine protein methyltransferase 1 homolog.